Reading from the N-terminus, the 766-residue chain is Leucine-rich repeat and fibronectin type III domain-containing protein 1 (766 aa).

A signal peptide spans 1–31; it reads MAPGPFSSGLLSPPPAALPFLLLLWAGASRG. Residues 32 to 65 enclose the LRRNT domain; it reads QPCPGRCICQNVAPTLTMLCAKTGLLFVPPAIDR. Residues 32–536 are Extracellular-facing; sequence QPCPGRCICQ…LRAHFLGGTM (505 aa). 7 LRR repeats span residues 66–87, 90–111, 114–135, 138–159, 163–184, 187–208, and 211–232; these read RVVELRLTDNFIAAVRRRDFAN, SLVHLTLSRNTIGQVAAGAFAD, ALRALHLDSNRLAEVRGDQLRG, NLRHLILGNNQIRKVESAAFDA, TVEDLDLSYNNLEALPWEAVGQ, NLNTLTLDHNLIDHIAEGTFVQ, and KLVRLDMTSNRLHKLPPDGLFL. The N-linked (GlcNAc...) asparagine glycan is linked to asparagine 87. One can recognise an LRRCT domain in the interval 252–298; that stretch reads NPLHCNCELLWLRRLTREDDLETCATPEHLTDRYFWSIPEEEFLCEP. The Ig-like domain occupies 299-386; sequence PLITRQAGGR…GEATAPVEVC (88 aa). Cysteine 321 and cysteine 370 form a disulfide bridge. Asparagine 343 carries N-linked (GlcNAc...) asparagine glycosylation. The tract at residues 397 to 422 is disordered; it reads PAAPPPLTEPGSSDIATPGRPGANDS. The Fibronectin type-III domain maps to 424-520; it reads TERRLVAAEL…GCVQFTTAGD (97 aa). Residues 537-557 form a helical membrane-spanning segment; it reads IIAIGGVIVASVLVFIVLLMI. Residues 558–766 are Cytoplasmic-facing; that stretch reads RYKVYGDGDS…STEWMLESTV (209 aa). Disordered regions lie at residues 568-601 and 646-742; these read RRIKGTSRSPPRVSHVCSQTNGSSAQQASAPPAP and CLLP…GEDG. Serine 713 is modified (phosphoserine). A compositionally biased stretch (basic residues) spans 714 to 727; that stretch reads YPRRARRTKRHRST.

This sequence belongs to the LRFN family. As to quaternary structure, forms heteromeric complexes with LRFN2, LRFN4 and LRFN5; binding to LRFN2 and LRFN5 may be weaker than that to LRFN4. Also interacts with LRFN3. Forms homomeric complexes, but not across cell junctions. Interacts with DLG1, DLG2 and DLG4, but not with MAGI2, not CASK. Interacts with DLG3. Interacts with 2 AMPA receptor subunits GRIA1 and GRIA2 and NMDA receptor subunit GRIN1. In terms of processing, glycosylated. Mainly expressed in brain (at protein level) and testis. In brain, found in cerebral cortex (including pyramidal neurons), hippocampus (including CA3 and CA1 neurons), dentate gyrus, cerebellum (including Purkinje neurons) (at protein level) (at protein level). Also expressed in the olfactory bulb.

It localises to the membrane. It is found in the synapse. Its subcellular location is the postsynaptic density membrane. Its function is as follows. Promotes neurite outgrowth in hippocampal neurons. Involved in the regulation of the differentiation and maintenance of excitatory synapses. Induces the clustering of excitatory postsynaptic proteins, including DLG4, DLGAP1, GRIA1 and GRIN1. The sequence is that of Leucine-rich repeat and fibronectin type III domain-containing protein 1 (Lrfn1) from Rattus norvegicus (Rat).